A 348-amino-acid polypeptide reads, in one-letter code: MVRTINETFLKACRGERTDYVPAWYMRQAGRSQPEYRKIKEKYSLFEITHNPELCAYVTKLPVDQYNVDAAILYKDIMSPLPAIGVDVEIKSGIGPVIDNPIRSLQDVEKLGEINPEDDVPYILDTIRLLTTEMLDVPLIGFSGAPFTLASYMIEGGPSRNYHNTKAFMYAEPKAWFALMDKLADMVITYLKAQINAGAKAVQIFDSWVGTVNVADYRVFIKPAMERIFAEVRTMGVPMIMHGVGAPHLVNEWHDLPLDVVGLDWRLPIEEARARGVHKAVQGNMDPSFLLAPWSVIEEHVKGILDQGMKQPGYIFNLGHGVFPEVNPDTLKRLTTFIHEYSKGQLAK.

Residues 27–31 (RQAGR), phenylalanine 46, aspartate 76, tyrosine 152, serine 207, and histidine 320 each bind substrate.

It belongs to the uroporphyrinogen decarboxylase family. Homodimer.

The protein resides in the cytoplasm. The catalysed reaction is uroporphyrinogen III + 4 H(+) = coproporphyrinogen III + 4 CO2. It participates in porphyrin-containing compound metabolism; protoporphyrin-IX biosynthesis; coproporphyrinogen-III from 5-aminolevulinate: step 4/4. Catalyzes the decarboxylation of four acetate groups of uroporphyrinogen-III to yield coproporphyrinogen-III. The sequence is that of Uroporphyrinogen decarboxylase from Bacillus cereus (strain AH820).